Consider the following 359-residue polypeptide: Probable F-box protein At3g61730 (359 aa).

Basic and acidic residues-rich tracts occupy residues 1 to 14 and 37 to 48; these read MKTR…DSRG and QKNDIQREEDGR. The segment at 1 to 60 is disordered; sequence MKTRSSDAEGDSRGKMIAPVGEGNGGRKRKLVQSNEQKNDIQREEDGRAKRRIVQSSDQK. An F-box; degenerate domain is found at 82-128; that stretch reads QSRFSWYEQDIWTYISRFLDGKSLVKLGATNKWFYKIAMEDTVWRFA.

As to quaternary structure, interacts with SKP1A. As to expression, expressed in flower buds, developing anthers, pollen grains, siliques, rosette leaves and roots. Detected at lower levels in open flowers, stems and cauline leaves. Expressed in young seedling in the hydathodes, shoot apical meristem, root tips and lateral root primordia.

It is found in the nucleus. Its function is as follows. Regulates tapetum degeneration and pollen maturation during anther development. This is Probable F-box protein At3g61730 (RMF) from Arabidopsis thaliana (Mouse-ear cress).